Here is a 127-residue protein sequence, read N- to C-terminus: Phospholipase A2 homolog otoconin-22 (127 aa).

N-linked (GlcNAc...) asparagine glycosylation occurs at N20. Cystine bridges form between C26–C120, C28–C44, C43–C99, C49–C127, C50–C92, C59–C85, and C78–C90. The N-linked (GlcNAc...) asparagine glycan is linked to N113.

It belongs to the phospholipase A2 family. Monomer. Otoconial membrane in the maculae of the saccule and utricle. Otoconia are composites of proteins and inorganic crystals formed in the peripheral portion of the vestibular system of vertebrates. The otoconial membranes contain small crystals of calcium carbonate known as otoliths (ear stones) if there is a single deposit or as otoconia (ear dust) if there are many. Each mineral polymorph of otoconia has a protein unique to that polymorph.

It localises to the secreted. Major protein of the aragonitic otoconia. It is unlikely that this protein has phospholipase A2 activity. The sequence is that of Phospholipase A2 homolog otoconin-22 from Xenopus laevis (African clawed frog).